A 93-amino-acid chain; its full sequence is Acylphosphatase (93 aa).

An Acylphosphatase-like domain is found at 7–93; sequence RLTAWVHGRV…ADAIAGFTER (87 aa). Residues Arg-22 and Asn-40 contribute to the active site.

The protein belongs to the acylphosphatase family.

It catalyses the reaction an acyl phosphate + H2O = a carboxylate + phosphate + H(+). The chain is Acylphosphatase (acyP) from Mycolicibacterium vanbaalenii (strain DSM 7251 / JCM 13017 / BCRC 16820 / KCTC 9966 / NRRL B-24157 / PYR-1) (Mycobacterium vanbaalenii).